Consider the following 474-residue polypeptide: Hepatocyte nuclear factor 4-alpha (474 aa).

A DNA-binding region (nuclear receptor) is located at residues 57–132 (SALCAICGDR…AGMKKEAVQN (76 aa)). NR C4-type zinc fingers lie at residues 60 to 80 (CAIC…CDGC) and 96 to 120 (CRFS…LKKC). Residues Ser142 and Ser143 each carry the phosphoserine; by PKA modification. The residue at position 144 (Tyr144) is a Phosphotyrosine. Residues 147–377 (SSLPSINALL…NLLQEMLLGG (231 aa)) form the NR LBD domain. Phosphothreonine is present on Thr166. Residue Ser167 is modified to Phosphoserine. Glycyl lysine isopeptide (Lys-Gly) (interchain with G-Cter in ubiquitin) cross-links involve residues Lys234 and Lys307. The residue at position 313 (Ser313) is a Phosphoserine; by AMPK. The short motif at 368 to 376 (NLLQEMLLG) is the 9aaTAD element. Residues 413 to 450 (SNGQMCEWPRPRGQAATPETPQPSPPSGSGSESYKLLP) form a disordered region. Phosphothreonine is present on residues Thr429 and Thr432. Phosphoserine is present on Ser436. Lys458 carries the post-translational modification N6-acetyllysine.

This sequence belongs to the nuclear hormone receptor family. NR2 subfamily. In terms of assembly, homodimerization is required for HNF4-alpha to bind to its recognition site. Interacts with CLOCK, BMAL1, CRY1, CRY2, PER1 and PER2. Interacts with NR0B2/SHP; the resulting heterodimer is transcriptionally inactive. Interacts with DDX3X; this interaction disrupts the interaction between HNF4 and NR0B2 that forms inactive heterodimers and enhances the formation of active HNF4 homodimers. Post-translationally, phosphorylation at Ser-313 by AMPK reduces the ability to form homodimers and bind DNA. Phosphorylated in the recognition sequence R-R-S-S near the DNA-binding domain; phosphorylation results in decrease in DNA-binding activity. Phosphorylation of HNF4 depends on the diet and is decreased by a carbohydrate-rich diet and is increased by fasting. In terms of processing, the N-terminus is blocked. Acetylation at Lys-458 lowers transcriptional activation by about two-fold. As to expression, liver, kidney and intestine.

It localises to the nucleus. Transcriptional regulator which controls the expression of hepatic genes during the transition of endodermal cells to hepatic progenitor cells, facilitating the recruitment of RNA pol II to the promoters of target genes. Activates the transcription of CYP2C38. Represses the CLOCK-BMAL1 transcriptional activity and is essential for circadian rhythm maintenance and period regulation in the liver and colon cells. The sequence is that of Hepatocyte nuclear factor 4-alpha (Hnf4a) from Rattus norvegicus (Rat).